Consider the following 237-residue polypeptide: Uridylate kinase (237 aa).

Residue 12-15 coordinates ATP; sequence KLSG. The involved in allosteric activation by GTP stretch occupies residues 20-25; the sequence is GDEGFG. Residue Gly54 participates in UMP binding. Residues Gly55 and Arg59 each contribute to the ATP site. UMP-binding positions include Asp74 and 135–142; that span reads TGSPFFTT. 3 residues coordinate ATP: Thr162, Tyr168, and Asp171.

The protein belongs to the UMP kinase family. Homohexamer.

The protein localises to the cytoplasm. The enzyme catalyses UMP + ATP = UDP + ADP. It participates in pyrimidine metabolism; CTP biosynthesis via de novo pathway; UDP from UMP (UMPK route): step 1/1. With respect to regulation, allosterically activated by GTP. Inhibited by UTP. Catalyzes the reversible phosphorylation of UMP to UDP. This chain is Uridylate kinase, found in Actinobacillus pleuropneumoniae serotype 5b (strain L20).